A 265-amino-acid polypeptide reads, in one-letter code: Isoprenyl transferase (265 aa).

Asp-35 is an active-site residue. A Mg(2+)-binding site is contributed by Asp-35. Residues 36–39, Trp-40, Arg-48, His-52, and 80–82 each bind substrate; these read GNGR and STE. The active-site Proton acceptor is the Asn-83. Residues Trp-84, Arg-86, Arg-203, and 209–211 contribute to the substrate site; that span reads RIS. A Mg(2+)-binding site is contributed by Glu-222.

It belongs to the UPP synthase family. Homodimer. Mg(2+) serves as cofactor.

Its function is as follows. Catalyzes the condensation of isopentenyl diphosphate (IPP) with allylic pyrophosphates generating different type of terpenoids. The protein is Isoprenyl transferase of Prochlorococcus marinus (strain MIT 9313).